We begin with the raw amino-acid sequence, 562 residues long: Transmembrane E3 ubiquitin-protein ligase FLY1 (562 aa).

The signal sequence occupies residues 1 to 32 (MKKREHLGLGFFEWQIILWLSIWLAISQQALG). Over 33–262 (LRPIREKPRS…TSVNVEVYYN (230 aa)) the chain is Lumenal. Residues 263–283 (KAVNYTLMVTFVSFLQVLLLI) traverse the membrane as a helical segment. Residues 284–297 (RQMEHGNTQSGAAK) lie on the Cytoplasmic side of the membrane. The helical transmembrane segment at 298 to 318 (VSIVMIGQQAIMDAYLCLLHL) threads the bilayer. The Lumenal portion of the chain corresponds to 319-321 (TAG). A helical membrane pass occupies residues 322-342 (ILVESLFNAFATAAFFKFVVF). The Cytoplasmic segment spans residues 343–373 (SIFEMRYLLAIWKATRPSNSGEGWETMRREL). Residues 374-394 (SFLYSRFYGILLGGILIMYQF) form a helical membrane-spanning segment. The Lumenal segment spans residues 395 to 397 (HNY). A helical membrane pass occupies residues 398–418 (MQPILLLMYSFWIPQIVANVV). The Cytoplasmic portion of the chain corresponds to 419-426 (RDSRKPLH). The chain crosses the membrane as a helical span at residues 427-447 (PYYILGMTATRLAIPLYVFGC). Residues 448–458 (PHNFMRVEPNK) are Lumenal-facing. Residues 459–479 (VWCICLCTFMGLQAVILLLQH) traverse the membrane as a helical segment. Residues 480 to 562 (YFGSRCFVPR…PTCRRSLPPA (83 aa)) lie on the Cytoplasmic side of the membrane. Residues 512 to 556 (CVICMTAIDLRQHTSDCMVTPCEHFFHSGCLQRWMDIKMECPTCR) form an RING-type; atypical zinc finger.

In terms of tissue distribution, highly expressed in stems. Expressed in root xylem and seed coat.

Its subcellular location is the endomembrane system. It carries out the reaction S-ubiquitinyl-[E2 ubiquitin-conjugating enzyme]-L-cysteine + [acceptor protein]-L-lysine = [E2 ubiquitin-conjugating enzyme]-L-cysteine + N(6)-ubiquitinyl-[acceptor protein]-L-lysine.. It functions in the pathway protein modification; protein ubiquitination. Functionally, E3 ubiquitin-protein ligase that regulates the degree of methylesterification of pectin in seed mucilage. May be involved in the recycling of pectin methylesterase enzymes in the endomembrane system of seed coat epidermal cells. Possesses E3 ubiquitin-protein ligase activity in vitro when associated with the E1 enzyme UBA1 and the E2 enzyme UBC8. May be involved in xylem development. In Arabidopsis thaliana (Mouse-ear cress), this protein is Transmembrane E3 ubiquitin-protein ligase FLY1.